The chain runs to 190 residues: Proline-rich protein 3 (190 aa).

3 disordered regions span residues 1 to 94 (MPKR…GLGP), 110 to 130 (PPFP…KEAR), and 142 to 161 (KNTY…SDRP). Pro residues predominate over residues 37–48 (MGPPSLLGPPPM). Residues 157 to 185 (KSDRPVCRHFSKKGHCRYEDHCAFYHPGV) form a C3H1-type zinc finger.

This chain is Proline-rich protein 3 (Prr3), found in Mus musculus (Mouse).